A 544-amino-acid polypeptide reads, in one-letter code: Chaperonin GroEL 3 (544 aa).

Residues 30–33 (TLGP), Lys51, 87–91 (DGTTT), Gly415, and Asp496 contribute to the ATP site.

It belongs to the chaperonin (HSP60) family. In terms of assembly, forms a cylinder of 14 subunits composed of two heptameric rings stacked back-to-back. Interacts with the co-chaperonin GroES.

It localises to the cytoplasm. The catalysed reaction is ATP + H2O + a folded polypeptide = ADP + phosphate + an unfolded polypeptide.. In terms of biological role, together with its co-chaperonin GroES, plays an essential role in assisting protein folding. The GroEL-GroES system forms a nano-cage that allows encapsulation of the non-native substrate proteins and provides a physical environment optimized to promote and accelerate protein folding. The polypeptide is Chaperonin GroEL 3 (Rhizobium etli (strain ATCC 51251 / DSM 11541 / JCM 21823 / NBRC 15573 / CFN 42)).